The sequence spans 229 residues: Cytidylate kinase (229 aa).

7-15 (GPAGAGKSS) lines the ATP pocket.

It belongs to the cytidylate kinase family. Type 1 subfamily.

It is found in the cytoplasm. The catalysed reaction is CMP + ATP = CDP + ADP. It carries out the reaction dCMP + ATP = dCDP + ADP. In Rhodopirellula baltica (strain DSM 10527 / NCIMB 13988 / SH1), this protein is Cytidylate kinase.